Here is a 104-residue protein sequence, read N- to C-terminus: Co-chaperonin GroES 2 (104 aa).

Belongs to the GroES chaperonin family. Heptamer of 7 subunits arranged in a ring. Interacts with the chaperonin GroEL.

It localises to the cytoplasm. Functionally, together with the chaperonin GroEL, plays an essential role in assisting protein folding. The GroEL-GroES system forms a nano-cage that allows encapsulation of the non-native substrate proteins and provides a physical environment optimized to promote and accelerate protein folding. GroES binds to the apical surface of the GroEL ring, thereby capping the opening of the GroEL channel. This chain is Co-chaperonin GroES 2, found in Bradyrhizobium diazoefficiens (strain JCM 10833 / BCRC 13528 / IAM 13628 / NBRC 14792 / USDA 110).